We begin with the raw amino-acid sequence, 159 residues long: Transmembrane protein 89 (159 aa).

Positions 1-24 (MLHVLASLPLLLLLVTSASTHAWS) are cleaved as a signal peptide. At 25–63 (RPLWYQVGLDLQPWGCQPKSVEGCRGGLSCPGYWLGPGA) the chain is on the extracellular side. Residues 64–86 (SRIYPVAAVMITTTMLMICRKIL) form a helical membrane-spanning segment. Residues 87-159 (QGRRRSQATK…QIKGTSTQSG (73 aa)) lie on the Cytoplasmic side of the membrane. Residues 91–110 (RSQATKGEHPQVTTEPCGPW) are disordered.

It localises to the membrane. This chain is Transmembrane protein 89 (TMEM89), found in Homo sapiens (Human).